The following is an 855-amino-acid chain: DNA mismatch repair protein MutS (855 aa).

613–620 (GPNMGGKS) contacts ATP.

Belongs to the DNA mismatch repair MutS family.

This protein is involved in the repair of mismatches in DNA. It is possible that it carries out the mismatch recognition step. This protein has a weak ATPase activity. This Azotobacter vinelandii (strain DJ / ATCC BAA-1303) protein is DNA mismatch repair protein MutS.